The primary structure comprises 229 residues: Ribonuclease 3 (229 aa).

Residues 5–127 form the RNase III domain; it reads LNRLERKLGH…LIGAIYLDAG (123 aa). Glu40 contributes to the Mg(2+) binding site. Residue Asp44 is part of the active site. The Mg(2+) site is built by Asp113 and Glu116. Residue Glu116 is part of the active site. Residues 154–224 form the DRBM domain; it reads DPKTRLQEFL…AAAALVALGV (71 aa).

The protein belongs to the ribonuclease III family. As to quaternary structure, homodimer. Requires Mg(2+) as cofactor.

The protein localises to the cytoplasm. The enzyme catalyses Endonucleolytic cleavage to 5'-phosphomonoester.. Functionally, digests double-stranded RNA. Involved in the processing of primary rRNA transcript to yield the immediate precursors to the large and small rRNAs (23S and 16S). Processes some mRNAs, and tRNAs when they are encoded in the rRNA operon. Processes pre-crRNA and tracrRNA of type II CRISPR loci if present in the organism. This Azotobacter vinelandii (strain DJ / ATCC BAA-1303) protein is Ribonuclease 3.